The sequence spans 662 residues: p-hydroxybenzoic acid efflux pump subunit AaeB (662 aa).

11 helical membrane-spanning segments follow: residues 22 to 42, 52 to 72, 76 to 96, 102 to 122, 129 to 149, 161 to 181, 378 to 398, 415 to 435, 439 to 459, 467 to 487, and 491 to 511; these read FAFKLSFAIVLSLFLGFHLQL, AAIVAAGPAFAAGGEPFSGAI, GMLRVVGTFIGCIGALIIIIA, VVMLMLCCIWAGLCTWVSSLV, VFGLAGYTTLIIIVSTQGTPL, EIVLGIVCAILADLLFSPRSI, LFWLSTGWTSGSVCMVMIAVV, FLFGTIYALPLGALMFMFIMP, QSMLLLCLSLGAMAFFLGLEV, LGALASTINILVLDNPMTFHI, and LDSAIGQIIGCFLALMVILLI.

Belongs to the aromatic acid exporter ArAE (TC 2.A.85) family.

The protein localises to the cell inner membrane. Forms an efflux pump with AaeA. Could function as a metabolic relief valve, allowing to eliminate certain compounds when they accumulate to high levels in the cell. This chain is p-hydroxybenzoic acid efflux pump subunit AaeB, found in Pectobacterium carotovorum subsp. carotovorum (strain PC1).